Reading from the N-terminus, the 1046-residue chain is Translation initiation factor IF-2 (1046 aa).

The segment at 49–448 is disordered; the sequence is EAFPAEGSAP…MGAMVPRGNG (400 aa). Over residues 52-71 the composition is skewed to low complexity; that stretch reads PAEGSAPSSRPGGRPGNGAR. The span at 94–111 shows a compositional bias: pro residues; it reads RPGPGGRPVPGRPGPAPL. 2 stretches are compositionally biased toward low complexity: residues 112 to 139 and 147 to 159; these read PGASRPSTPTAAPQSQPAQTQPPQSQPV and PRPAAAAASAAAP. Pro residues predominate over residues 160-176; the sequence is APAPSAPAPAPSAPAPA. A compositionally biased stretch (low complexity) spans 177-187; it reads PITSAPTAATP. Over residues 188 to 206 the composition is skewed to pro residues; sequence PAAPQRPTPGGPRPGPAAP. Positions 210 to 222 are enriched in gly residues; it reads RTGGPGGPGGPGG. Residues 223–235 are compositionally biased toward pro residues; sequence GPRPGPRPGPRPA. A compositionally biased stretch (low complexity) spans 244-253; sequence SPAAGPRAAS. Pro residues-rich tracts occupy residues 260 to 281 and 304 to 314; these read SAPPRPGAPRPGGPRPGGPRPG and RPTPGQMPPRP. The span at 320–333 shows a compositional bias: low complexity; sequence PRPNSNMFQPRPAG. Residues 334 to 414 are compositionally biased toward gly residues; that stretch reads GAPGRPGGGG…AGAFGPGGRG (81 aa). Basic residues predominate over residues 415–426; the sequence is RPGRQRKSKRAK. Positions 539–711 constitute a tr-type G domain; sequence ARPPVVTVMG…VILTADASLD (173 aa). Residues 548–555 form a G1 region; sequence GHVDHGKT. 548–555 is a GTP binding site; the sequence is GHVDHGKT. A G2 region spans residues 573–577; sequence GITQH. The segment at 598-601 is G3; that stretch reads DTPG. GTP is bound by residues 598-602 and 652-655; these read DTPGH and NKVD. Residues 652 to 655 form a G4 region; that stretch reads NKVD. Positions 688–690 are G5; the sequence is SAR.

It belongs to the TRAFAC class translation factor GTPase superfamily. Classic translation factor GTPase family. IF-2 subfamily.

It is found in the cytoplasm. In terms of biological role, one of the essential components for the initiation of protein synthesis. Protects formylmethionyl-tRNA from spontaneous hydrolysis and promotes its binding to the 30S ribosomal subunits. Also involved in the hydrolysis of GTP during the formation of the 70S ribosomal complex. This is Translation initiation factor IF-2 from Parafrankia sp. (strain EAN1pec).